A 430-amino-acid polypeptide reads, in one-letter code: Glutamate-1-semialdehyde 2,1-aminomutase (430 aa).

The residue at position 266 (K266) is an N6-(pyridoxal phosphate)lysine.

Belongs to the class-III pyridoxal-phosphate-dependent aminotransferase family. HemL subfamily. As to quaternary structure, homodimer. Requires pyridoxal 5'-phosphate as cofactor.

It localises to the cytoplasm. It carries out the reaction (S)-4-amino-5-oxopentanoate = 5-aminolevulinate. It participates in porphyrin-containing compound metabolism; protoporphyrin-IX biosynthesis; 5-aminolevulinate from L-glutamyl-tRNA(Glu): step 2/2. The polypeptide is Glutamate-1-semialdehyde 2,1-aminomutase (Acidithiobacillus ferrooxidans (strain ATCC 23270 / DSM 14882 / CIP 104768 / NCIMB 8455) (Ferrobacillus ferrooxidans (strain ATCC 23270))).